A 322-amino-acid polypeptide reads, in one-letter code: uncharacterized protein (322 aa).

The helical transmembrane segment at 299–319 threads the bilayer; it reads GLLLEGTIVALILLEIILALA.

The protein resides in the membrane. This is an uncharacterized protein from Methanocaldococcus jannaschii (strain ATCC 43067 / DSM 2661 / JAL-1 / JCM 10045 / NBRC 100440) (Methanococcus jannaschii).